The following is a 127-amino-acid chain: Fluoride-specific ion channel FluC (127 aa).

4 helical membrane-spanning segments follow: residues 4 to 24 (LSVLGFIALGGAFGACSRYLI), 38 to 58 (YGTLTVNVVGSFIMGLLIAAF), 71 to 91 (IIGLGFLGALTTFSTFSMDNV), and 104 to 124 (LNVLLNVVLSISAAWIGFQLL). Na(+) is bound by residues Gly-78 and Thr-81.

Belongs to the fluoride channel Fluc/FEX (TC 1.A.43) family.

It is found in the cell inner membrane. The enzyme catalyses fluoride(in) = fluoride(out). Na(+) is not transported, but it plays an essential structural role and its presence is essential for fluoride channel function. Fluoride-specific ion channel. Important for reducing fluoride concentration in the cell, thus reducing its toxicity. The polypeptide is Fluoride-specific ion channel FluC (Vibrio campbellii (strain ATCC BAA-1116)).